The chain runs to 463 residues: Mitochondrial dynamics protein MID49 (463 aa).

Residues 1-24 lie on the Mitochondrial intermembrane side of the membrane; sequence MAELQIRKKEKKSGDGIGTMVDFL. Residues 25–47 form a helical membrane-spanning segment; sequence LANARLVLGVGGAAMLGIATLAV. Topologically, residues 48–463 are cytoplasmic; the sequence is KRLIDRATSP…EPDDVLKRER (416 aa). The segment at 87–119 is disordered; sequence TLRRKEDLEHHCAPLSLPDPSQKMPEATGTSQV. The segment covering 89–98 has biased composition (basic and acidic residues); the sequence is RRKEDLEHHC.

Belongs to the MID49/MID51 family.

It is found in the mitochondrion outer membrane. Functionally, mitochondrial outer membrane protein which regulates mitochondrial organization. It is required for mitochondrial fission and promotes the recruitment and association of the fission mediator dynamin-related protein 1 (DNM1L) to the mitochondrial surface independently of the mitochondrial fission FIS1 and MFF proteins. Regulates DNM1L GTPase activity. This chain is Mitochondrial dynamics protein MID49 (mief2), found in Xenopus laevis (African clawed frog).